The following is a 320-amino-acid chain: Cytochrome c1-1, heme protein, mitochondrial (320 aa).

Residues 1 to 77 (MSLGKKIRIG…LLSFATIAYS (77 aa)) constitute a mitochondrion transit peptide. The Mitochondrial intermembrane segment spans residues 78-280 (DEAEHGLECP…WAAEPEMEER (203 aa)). The Cytochrome c domain occupies 103-210 (ASIRRGHQVY…NGQNYVFALL (108 aa)). Cys-116, Cys-119, His-120, and Met-239 together coordinate heme c. A helical transmembrane segment spans residues 281 to 301 (KLMGFKWIFVLSLALLQAAYY). At 302–320 (RRLRWSVLKSRKLVLDVVN) the chain is on the mitochondrial matrix side.

Belongs to the cytochrome c family. As to quaternary structure, component of the ubiquinol-cytochrome c oxidoreductase (cytochrome b-c1 complex, complex III, CIII), a multisubunit enzyme composed of 3 respiratory subunits cytochrome b, cytochrome c1 and Rieske protein, 2 core protein subunits, and additional low-molecular weight protein subunits. The complex exists as an obligatory dimer and forms supercomplexes (SCs) in the inner mitochondrial membrane with cytochrome c oxidase (complex IV, CIV). It depends on heme c as a cofactor. In terms of tissue distribution, in all tissues analyzed.

The protein localises to the mitochondrion inner membrane. It carries out the reaction a quinol + 2 Fe(III)-[cytochrome c](out) = a quinone + 2 Fe(II)-[cytochrome c](out) + 2 H(+)(out). Functionally, component of the ubiquinol-cytochrome c oxidoreductase, a multisubunit transmembrane complex that is part of the mitochondrial electron transport chain which drives oxidative phosphorylation. The respiratory chain contains 3 multisubunit complexes succinate dehydrogenase (complex II, CII), ubiquinol-cytochrome c oxidoreductase (cytochrome b-c1 complex, complex III, CIII) and cytochrome c oxidase (complex IV, CIV), that cooperate to transfer electrons derived from NADH and succinate to molecular oxygen, creating an electrochemical gradient over the inner membrane that drives transmembrane transport and the ATP synthase. The cytochrome b-c1 complex catalyzes electron transfer from ubiquinol to cytochrome c, linking this redox reaction to translocation of protons across the mitochondrial inner membrane, with protons being carried across the membrane as hydrogens on the quinol. In the process called Q cycle, 2 protons are consumed from the matrix, 4 protons are released into the intermembrane space and 2 electrons are passed to cytochrome c. Cytochrome c1 is a catalytic core subunit containing a c-type heme. It transfers electrons from the [2Fe-2S] iron-sulfur cluster of the Rieske protein to cytochrome c. The chain is Cytochrome c1-1, heme protein, mitochondrial (CYCL) from Solanum tuberosum (Potato).